We begin with the raw amino-acid sequence, 173 residues long: Small ribosomal subunit protein uS9 (173 aa).

Polar residues predominate over residues Met-1 to Thr-15. 2 disordered regions span residues Met-1 to Tyr-26 and Glu-135 to Arg-173. Basic residues predominate over residues Lys-154 to Arg-173.

This sequence belongs to the universal ribosomal protein uS9 family.

In Cutibacterium acnes (strain DSM 16379 / KPA171202) (Propionibacterium acnes), this protein is Small ribosomal subunit protein uS9.